Reading from the N-terminus, the 138-residue chain is Large ribosomal subunit protein uL16c (138 aa).

The protein belongs to the universal ribosomal protein uL16 family. As to quaternary structure, part of the 50S ribosomal subunit.

It localises to the plastid. The protein localises to the chloroplast. The chain is Large ribosomal subunit protein uL16c from Tetradesmus obliquus (Green alga).